The chain runs to 230 residues: CRP-like protein Clp (230 aa).

A nucleoside 3',5'-cyclic phosphate is bound at residue 18–139; that stretch reads PSLALDAGTI…APKILYAIGV (122 aa). Residues 158 to 230 enclose the HTH crp-type domain; the sequence is LDVTDRIVRT…GKTVVLYGTR (73 aa). A DNA-binding region (H-T-H motif) is located at residues 190 to 209; that stretch reads RQELARLVGCSREMAGRVLK.

In terms of assembly, homodimer.

The protein localises to the cytoplasm. With respect to regulation, allosterically inhibited by cyclic di-GMP (c-di-GMP), which binds to Clp and abolishes its ability to bind its target gene promoter. Global transcriptional regulator that regulates virulence factors production by activating or repressing the expression of a large set of genes in diffusible signal factor (DSF) pathway. The sequence is that of CRP-like protein Clp (clp) from Xanthomonas oryzae pv. oryzae (strain MAFF 311018).